A 423-amino-acid polypeptide reads, in one-letter code: Enolase (423 aa).

Gln-164 is a (2R)-2-phosphoglycerate binding site. Glu-206 acts as the Proton donor in catalysis. Positions 243, 289, and 316 each coordinate Mg(2+). Positions 341, 370, 371, and 392 each coordinate (2R)-2-phosphoglycerate. The Proton acceptor role is filled by Lys-341.

Belongs to the enolase family. Requires Mg(2+) as cofactor.

It localises to the cytoplasm. It is found in the secreted. Its subcellular location is the cell surface. It catalyses the reaction (2R)-2-phosphoglycerate = phosphoenolpyruvate + H2O. It functions in the pathway carbohydrate degradation; glycolysis; pyruvate from D-glyceraldehyde 3-phosphate: step 4/5. Functionally, catalyzes the reversible conversion of 2-phosphoglycerate (2-PG) into phosphoenolpyruvate (PEP). It is essential for the degradation of carbohydrates via glycolysis. The chain is Enolase from Desulfotalea psychrophila (strain LSv54 / DSM 12343).